We begin with the raw amino-acid sequence, 253 residues long: 3-deoxy-manno-octulosonate cytidylyltransferase (253 aa).

It belongs to the KdsB family.

Its subcellular location is the cytoplasm. The enzyme catalyses 3-deoxy-alpha-D-manno-oct-2-ulosonate + CTP = CMP-3-deoxy-beta-D-manno-octulosonate + diphosphate. Its pathway is nucleotide-sugar biosynthesis; CMP-3-deoxy-D-manno-octulosonate biosynthesis; CMP-3-deoxy-D-manno-octulosonate from 3-deoxy-D-manno-octulosonate and CTP: step 1/1. It participates in bacterial outer membrane biogenesis; lipopolysaccharide biosynthesis. Its function is as follows. Activates KDO (a required 8-carbon sugar) for incorporation into bacterial lipopolysaccharide in Gram-negative bacteria. This chain is 3-deoxy-manno-octulosonate cytidylyltransferase, found in Idiomarina loihiensis (strain ATCC BAA-735 / DSM 15497 / L2-TR).